Here is a 98-residue protein sequence, read N- to C-terminus: MSYYQQQCKQPCQPPPVCPPPKCPEPCPPPKCPEPCPPPVCCEPCPPPKCPEPCPPPVCCEPCPPPVCCEPCPPQPWQPKCPPVQFPPCQQKCPPKNK.

Tandem repeats lie at residues 21–29 (PKCPEPCPP), 30–38 (PKCPEPCPP), 39–47 (PVCCEPCPP), 48–56 (PKCPEPCPP), and 57–65 (PVCCEPCPP). The tract at residues 21-65 (PKCPEPCPPPKCPEPCPPPVCCEPCPPPKCPEPCPPPVCCEPCPP) is 5 X 9 AA approximate tandem repeats.

This sequence belongs to the cornifin (SPRR) family. As to expression, expressed in uterus.

The protein localises to the cytoplasm. Its function is as follows. Cross-linked envelope protein of keratinocytes. It is a keratinocyte protein that first appears in the cell cytosol, but ultimately becomes cross-linked to membrane proteins by transglutaminase. All that results in the formation of an insoluble envelope beneath the plasma membrane. This is Small proline-rich protein 2B (Sprr2b) from Mus musculus (Mouse).